Consider the following 410-residue polypeptide: SPbeta prophage-derived uncharacterized protein YonV (410 aa).

This Bacillus subtilis (strain 168) protein is SPbeta prophage-derived uncharacterized protein YonV (yonV).